The following is a 139-amino-acid chain: Diacylglycerol acyltransferase/mycolyltransferase Ag85A (139 aa).

Serine 10 (nucleophile) is an active-site residue. The substrate site is built by serine 10 and aspartate 38. The active site involves glutamate 114. Residues 116 to 119 (FVRT) and lysine 123 contribute to the substrate site.

Belongs to the mycobacterial A85 antigen family. As to quaternary structure, homodimer.

Its subcellular location is the secreted. It is found in the cell wall. The protein resides in the cytoplasm. It carries out the reaction an acyl-CoA + a 1,2-diacyl-sn-glycerol = a triacyl-sn-glycerol + CoA. The enzyme catalyses 2 alpha,alpha'-trehalose 6-mycolate = alpha,alpha'-trehalose 6,6'-bismycolate + alpha,alpha-trehalose. The antigen 85 proteins (FbpA, FbpB, FbpC) are responsible for the high affinity of mycobacteria for fibronectin, a large adhesive glycoprotein, which facilitates the attachment of M.tuberculosis to murine alveolar macrophages (AMs). They also help to maintain the integrity of the cell wall by catalyzing the transfer of mycolic acids to cell wall arabinogalactan, and through the synthesis of alpha,alpha-trehalose dimycolate (TDM, cord factor). They catalyze the transfer of a mycoloyl residue from one molecule of alpha,alpha-trehalose monomycolate (TMM) to another TMM, leading to the formation of TDM. FbpA mediates triacylglycerol (TAG) formation with long-chain acyl-CoA as the acyl donor and 1,2-dipalmitoyl-sn-glycerol (1,2-dipalmitin) as the acyl acceptor. It has a preference for C26:0-CoA over C18:1-CoA. This chain is Diacylglycerol acyltransferase/mycolyltransferase Ag85A (fbpA), found in Mycobacterium marinum.